A 171-amino-acid chain; its full sequence is UPF0312 protein MW2606 (171 aa).

This sequence belongs to the UPF0312 family.

The protein is UPF0312 protein MW2606 of Staphylococcus aureus (strain MW2).